Here is a 209-residue protein sequence, read N- to C-terminus: NAD(P)H-quinone oxidoreductase subunit N, chloroplastic (209 aa).

The N-terminal 45 residues, 1 to 45 (MGSRAICIQRVAPPCFEASQVKKIKTVGSFLVNTRSKRRRSTGVK), are a transit peptide targeting the chloroplast.

This sequence belongs to the NDH complex subunit N family. As to quaternary structure, part of the chloroplast NDH complex, composed of a mixture of chloroplast and nucleus encoded subunits. Component of the NDH subcomplex A, at least composed of ndhH, ndhI, ndhJ, ndhK, ndhL, ndhM, ndhN and ndhO.

It localises to the plastid. The protein localises to the chloroplast thylakoid membrane. It catalyses the reaction a plastoquinone + NADH + (n+1) H(+)(in) = a plastoquinol + NAD(+) + n H(+)(out). It carries out the reaction a plastoquinone + NADPH + (n+1) H(+)(in) = a plastoquinol + NADP(+) + n H(+)(out). In terms of biological role, NDH shuttles electrons from NAD(P)H:plastoquinone, via FMN and iron-sulfur (Fe-S) centers, to quinones in the photosynthetic chain and possibly in a chloroplast respiratory chain. The immediate electron acceptor for the enzyme in this species is believed to be plastoquinone. Couples the redox reaction to proton translocation, and thus conserves the redox energy in a proton gradient. The protein is NAD(P)H-quinone oxidoreductase subunit N, chloroplastic of Arabidopsis thaliana (Mouse-ear cress).